The sequence spans 163 residues: Flagellar assembly factor FliW (163 aa).

Basic and acidic residues predominate over residues 136–156 (PFFETSEKKQSGLQRLERQPE). Residues 136 to 163 (PFFETSEKKQSGLQRLERQPEKSVPPAG) are disordered.

This sequence belongs to the FliW family. Interacts with translational regulator CsrA and flagellin(s).

Its subcellular location is the cytoplasm. In terms of biological role, acts as an anti-CsrA protein, binds CsrA and prevents it from repressing translation of its target genes, one of which is flagellin. Binds to flagellin and participates in the assembly of the flagellum. In Geotalea uraniireducens (strain Rf4) (Geobacter uraniireducens), this protein is Flagellar assembly factor FliW.